The sequence spans 212 residues: MVDPGVSPGCVRFVTLEISPSMTMQGERLDAVVAEAVAGDRNALREVLETIRPIVVRYCRARVGTVERSGLSADDVAQEVCLATITALPRYRDRGRPFLAFLYGIAAHKVADAHRAAGRDRAYPAETLPERWSADAGPEQMAIEADSVTRMNELLEILPAKQREILILRVVVGLSAEETAAAVGSTTGAVRVAQHRALQRLKDEIVAAGDYA.

Positions 49 to 119 are sigma-70 factor domain-2; that stretch reads ETIRPIVVRY…VADAHRAAGR (71 aa). A Polymerase core binding motif is present at residues 75–78; it reads DVAQ. The sigma-70 factor domain-4 stretch occupies residues 152–201; it reads NELLEILPAKQREILILRVVVGLSAEETAAAVGSTTGAVRVAQHRALQRL. Positions 176 to 195 form a DNA-binding region, H-T-H motif; it reads AEETAAAVGSTTGAVRVAQH.

This sequence belongs to the sigma-70 factor family. ECF subfamily. Interacts transiently with the RNA polymerase catalytic core formed by RpoA, RpoB, RpoC and RpoZ (2 alpha, 1 beta, 1 beta' and 1 omega subunit) to form the RNA polymerase holoenzyme that can initiate transcription. Interacts (via sigma-70 factor domain 4) with RsdA.

In terms of biological role, sigma factors are initiation factors that promote the attachment of RNA polymerase to specific initiation sites and are then released. Extracytoplasmic function (ECF) sigma factors are held in an inactive form by an anti-sigma factor until released by regulated intramembrane proteolysis. The sequence is that of ECF RNA polymerase sigma factor SigD (sigD) from Mycobacterium bovis (strain ATCC BAA-935 / AF2122/97).